Reading from the N-terminus, the 308-residue chain is Oligopeptide transport ATP-binding protein AmiF (308 aa).

The 246-residue stretch at 6–251 (VEIKDLEISF…PIHPYTQALL (246 aa)) folds into the ABC transporter domain. An ATP-binding site is contributed by 42 to 49 (GESGSGKT).

This sequence belongs to the ABC transporter superfamily.

It is found in the cell membrane. Functionally, part of the binding-protein-dependent transport system for oligopeptides. Probably responsible for energy coupling to the transport system. The sequence is that of Oligopeptide transport ATP-binding protein AmiF (amiF) from Streptococcus pneumoniae serotype 4 (strain ATCC BAA-334 / TIGR4).